The following is a 126-amino-acid chain: UPF0102 protein HD_0802 (126 aa).

Belongs to the UPF0102 family.

In Haemophilus ducreyi (strain 35000HP / ATCC 700724), this protein is UPF0102 protein HD_0802.